The primary structure comprises 310 residues: Ribosomal RNA small subunit methyltransferase H (310 aa).

S-adenosyl-L-methionine-binding positions include 33–35 (AGH), aspartate 53, phenylalanine 79, aspartate 100, and glutamine 107.

It belongs to the methyltransferase superfamily. RsmH family.

It localises to the cytoplasm. The catalysed reaction is cytidine(1402) in 16S rRNA + S-adenosyl-L-methionine = N(4)-methylcytidine(1402) in 16S rRNA + S-adenosyl-L-homocysteine + H(+). Its function is as follows. Specifically methylates the N4 position of cytidine in position 1402 (C1402) of 16S rRNA. The chain is Ribosomal RNA small subunit methyltransferase H from Clostridium botulinum (strain Eklund 17B / Type B).